The sequence spans 307 residues: Agmatinase (307 aa).

Residues His128, Asp151, His153, Asp155, Asp232, and Asp234 each coordinate Mn(2+).

This sequence belongs to the arginase family. Agmatinase subfamily. The cofactor is Mn(2+).

The enzyme catalyses agmatine + H2O = urea + putrescine. The protein operates within amine and polyamine biosynthesis; putrescine biosynthesis via agmatine pathway; putrescine from agmatine: step 1/1. Catalyzes the formation of putrescine from agmatine. The chain is Agmatinase from Photorhabdus laumondii subsp. laumondii (strain DSM 15139 / CIP 105565 / TT01) (Photorhabdus luminescens subsp. laumondii).